Consider the following 120-residue polypeptide: Large ribosomal subunit protein uL18 (120 aa).

It belongs to the universal ribosomal protein uL18 family. As to quaternary structure, part of the 50S ribosomal subunit; part of the 5S rRNA/L5/L18/L25 subcomplex. Contacts the 5S and 23S rRNAs.

Functionally, this is one of the proteins that bind and probably mediate the attachment of the 5S RNA into the large ribosomal subunit, where it forms part of the central protuberance. In Rhodospirillum centenum (strain ATCC 51521 / SW), this protein is Large ribosomal subunit protein uL18.